The primary structure comprises 767 residues: Photosystem I P700 chlorophyll a apoprotein A1 (767 aa).

The next 8 helical transmembrane spans lie at 72 to 95, 158 to 181, 197 to 221, 305 to 323, 364 to 387, 403 to 429, 451 to 473, and 548 to 566; these read IFSA…FHGA, LMAL…FHYH, LNHH…HVSA, IAHH…GHMY, WHAQ…QHMY, IGLF…IAMV, AIIS…LYIH, and FMVH…LILL. Residues Cys590 and Cys599 each contribute to the [4Fe-4S] cluster site. Helical transmembrane passes span 606–627 and 681–703; these read HVFL…HFSW and TSAY…MFLF. Chlorophyll a' is bound at residue His692. Chlorophyll a contacts are provided by Met700 and Tyr708. Trp709 is a phylloquinone binding site. A helical membrane pass occupies residues 741 to 761; the sequence is AVGVAHYLLGGIATTWAFFHA.

Belongs to the PsaA/PsaB family. In terms of assembly, the PsaA/B heterodimer binds the P700 chlorophyll special pair and subsequent electron acceptors. PSI consists of a core antenna complex that captures photons, and an electron transfer chain that converts photonic excitation into a charge separation. The cyanobacterial PSI reaction center is composed of one copy each of PsaA,B,C,D,E,F,I,J,K,L,M and X, and forms trimeric complexes. It depends on PSI electron transfer chain: 5 chlorophyll a, 1 chlorophyll a', 2 phylloquinones and 3 4Fe-4S clusters. PSI core antenna: 90 chlorophyll a, 22 carotenoids, 3 phospholipids and 1 galactolipid. P700 is a chlorophyll a/chlorophyll a' dimer, A0 is one or more chlorophyll a, A1 is one or both phylloquinones and FX is a shared 4Fe-4S iron-sulfur center. as a cofactor.

It localises to the cellular thylakoid membrane. The catalysed reaction is reduced [plastocyanin] + hnu + oxidized [2Fe-2S]-[ferredoxin] = oxidized [plastocyanin] + reduced [2Fe-2S]-[ferredoxin]. Its function is as follows. PsaA and PsaB bind P700, the primary electron donor of photosystem I (PSI), as well as the electron acceptors A0, A1 and FX. PSI is a plastocyanin/cytochrome c6-ferredoxin oxidoreductase, converting photonic excitation into a charge separation, which transfers an electron from the donor P700 chlorophyll pair to the spectroscopically characterized acceptors A0, A1, FX, FA and FB in turn. Oxidized P700 is reduced on the lumenal side of the thylakoid membrane by plastocyanin or cytochrome c6. This is Photosystem I P700 chlorophyll a apoprotein A1 from Parasynechococcus marenigrum (strain WH8102).